We begin with the raw amino-acid sequence, 311 residues long: p-hydroxybenzoic acid efflux pump subunit AaeA (311 aa).

Residues isoleucine 11–phenylalanine 31 form a helical membrane-spanning segment.

It belongs to the membrane fusion protein (MFP) (TC 8.A.1) family.

It localises to the cell inner membrane. In terms of biological role, forms an efflux pump with AaeB. The polypeptide is p-hydroxybenzoic acid efflux pump subunit AaeA (Serratia proteamaculans (strain 568)).